The sequence spans 189 residues: Glycerol-3-phosphate acyltransferase (189 aa).

5 helical membrane-spanning segments follow: residues 1–21 (MFWLLAILAYLLGSLSFAILL), 51–71 (LAILTLLGDLCKGLLPVLIAS), 77–97 (LQDQAWIGVCAVIGHLFPLYF), 111–131 (MLLGLYPPAALLAVCAWLLTF), and 151–171 (LLAWQEPAALLPMSTLTLLIV).

This sequence belongs to the PlsY family. In terms of assembly, probably interacts with PlsX.

It is found in the cell inner membrane. The enzyme catalyses an acyl phosphate + sn-glycerol 3-phosphate = a 1-acyl-sn-glycero-3-phosphate + phosphate. The protein operates within lipid metabolism; phospholipid metabolism. Its function is as follows. Catalyzes the transfer of an acyl group from acyl-phosphate (acyl-PO(4)) to glycerol-3-phosphate (G3P) to form lysophosphatidic acid (LPA). This enzyme utilizes acyl-phosphate as fatty acyl donor, but not acyl-CoA or acyl-ACP. The polypeptide is Glycerol-3-phosphate acyltransferase (Pseudomonas fluorescens (strain Pf0-1)).